The chain runs to 610 residues: Estrogen receptor beta-2 (610 aa).

The tract at residues 1–170 (MSSSTGPAPA…GILGKGDTHF (170 aa)) is modulating. 2 consecutive NR C4-type zinc fingers follow at residues 171–191 (CAVC…CEGC) and 207–231 (CPAT…LRKC). The nuclear receptor DNA-binding region spans 171 to 236 (CAVCHDYASG…RLRKCYEVGM (66 aa)). One can recognise an NR LBD domain in the interval 302-538 (SPEQLVNCIL…DLLLEMLDAN (237 aa)). Residues 566-596 (HTSKQQPALKESNQDTRHSPQAEGTVDKTLH) form a disordered region. A compositionally biased stretch (basic and acidic residues) spans 577 to 596 (SNQDTRHSPQAEGTVDKTLH).

This sequence belongs to the nuclear hormone receptor family. NR3 subfamily. As to quaternary structure, binds DNA as a homodimer. Can form a heterodimer with ER-alpha. In terms of tissue distribution, predominantly expressed in pituitary, telencephalon and hypothalamus as well as in the liver.

The protein localises to the nucleus. Its function is as follows. Binds estrogens with an affinity similar to that of ER-alpha, and activates expression of reporter genes containing estrogen response elements (ERE) in an estrogen-dependent manner. The sequence is that of Estrogen receptor beta-2 (esr2b) from Carassius auratus (Goldfish).